The chain runs to 411 residues: Serine--tRNA ligase (411 aa).

226–228 is a binding site for L-serine; that stretch reads TSE. An ATP-binding site is contributed by 257 to 259; the sequence is RQE. Glutamate 280 contributes to the L-serine binding site. 344 to 347 is a binding site for ATP; that stretch reads EISS. Serine 379 lines the L-serine pocket.

The protein belongs to the class-II aminoacyl-tRNA synthetase family. Type-1 seryl-tRNA synthetase subfamily. Homodimer. The tRNA molecule binds across the dimer.

Its subcellular location is the cytoplasm. The catalysed reaction is tRNA(Ser) + L-serine + ATP = L-seryl-tRNA(Ser) + AMP + diphosphate + H(+). It carries out the reaction tRNA(Sec) + L-serine + ATP = L-seryl-tRNA(Sec) + AMP + diphosphate + H(+). It participates in aminoacyl-tRNA biosynthesis; selenocysteinyl-tRNA(Sec) biosynthesis; L-seryl-tRNA(Sec) from L-serine and tRNA(Sec): step 1/1. In terms of biological role, catalyzes the attachment of serine to tRNA(Ser). Is also able to aminoacylate tRNA(Sec) with serine, to form the misacylated tRNA L-seryl-tRNA(Sec), which will be further converted into selenocysteinyl-tRNA(Sec). The polypeptide is Serine--tRNA ligase (Campylobacter lari (strain RM2100 / D67 / ATCC BAA-1060)).